Here is a 377-residue protein sequence, read N- to C-terminus: Tyrosine-protein phosphatase 2 (377 aa).

The 321-residue stretch at 27–347 (IDKEFNFILQ…RFCYLAISEA (321 aa)) folds into the Tyrosine-protein phosphatase domain. The segment at 77 to 137 (IDDDDDDEDD…EDHGGSGDEG (61 aa)) is disordered. Acidic residues predominate over residues 78–91 (DDDDDDEDDNEDDI). Positions 92–102 (IVSNNNNNNNN) are enriched in low complexity. The segment covering 113–123 (GSSGQSDVMSN) has biased composition (polar residues). Residue Cys281 is the Phosphocysteine intermediate of the active site.

It belongs to the protein-tyrosine phosphatase family. Non-receptor class subfamily.

It catalyses the reaction O-phospho-L-tyrosyl-[protein] + H2O = L-tyrosyl-[protein] + phosphate. This Dictyostelium discoideum (Social amoeba) protein is Tyrosine-protein phosphatase 2 (ptpB).